The sequence spans 89 residues: Small ribosomal subunit protein uS15 (89 aa).

Residues 1 to 21 are compositionally biased toward basic and acidic residues; that stretch reads MSITTEEKARVMKEYGTKDGD. The segment at 1 to 24 is disordered; the sequence is MSITTEEKARVMKEYGTKDGDTGS.

It belongs to the universal ribosomal protein uS15 family. In terms of assembly, part of the 30S ribosomal subunit. Forms a bridge to the 50S subunit in the 70S ribosome, contacting the 23S rRNA.

In terms of biological role, one of the primary rRNA binding proteins, it binds directly to 16S rRNA where it helps nucleate assembly of the platform of the 30S subunit by binding and bridging several RNA helices of the 16S rRNA. Forms an intersubunit bridge (bridge B4) with the 23S rRNA of the 50S subunit in the ribosome. This Ruegeria pomeroyi (strain ATCC 700808 / DSM 15171 / DSS-3) (Silicibacter pomeroyi) protein is Small ribosomal subunit protein uS15.